The chain runs to 575 residues: MLGVLVLGALALAGLGFPAPAEPQPGGSQCVEHDCFALYPGPATFLNASQICDGLRGHLMTVRSSVAADVISLLLNGDGGVGRRRLWIGLQLPPGCGDPKRLGPLRGFQWVTGDNNTSYSRWARLDLNGAPLCGPLCVAVSAAEATVPSEPIWEEQQCEVKADGFLCEFHFPATCRPLAVEPGAAAAAVSITYGTPFAARGADFQALPVGSSAAVAPLGLQLMCTAPPGAVQGHWAREAPGAWDCSVENGGCEHACNAIPGAPRCQCPAGAALQADGRSCTASATQSCNDLCEHFCVPNPDQPGSYSCMCETGYRLAADQHRCEDVDDCILEPSPCPQRCVNTQGGFECHCYPNYDLVDGECVEPVDPCFRANCEYQCQPLNQTSYLCVCAEGFAPIPHEPHRCQMFCNQTACPADCDPNTQASCECPEGYILDDGFICTDIDECENGGFCSGVCHNLPGTFECICGPDSALARHIGTDCDSGKVDGGDSGSGEPPPSPTPGSTLTPPAVGLVHSGLLIGISIASLCLVVALLALLCHLRKKQGAARAKMEYKCAAPSKEVVLQHVRTERTPQRL.

Positions 1–18 are cleaved as a signal peptide; the sequence is MLGVLVLGALALAGLGFP. At 19–515 the chain is on the extracellular side; sequence APAEPQPGGS…TPPAVGLVHS (497 aa). Residues 31–169 form the C-type lectin domain; sequence VEHDCFALYP…VKADGFLCEF (139 aa). N-linked (GlcNAc...) asparagine glycosylation is found at N47, N115, and N116. 19 disulfides stabilise this stretch: C137/C158, C245/C256, C252/C265, C267/C280, C288/C296, C292/C308, C310/C323, C329/C340, C336/C349, C351/C362, C369/C378, C374/C388, C390/C404, C408/C413, C417/C425, C427/C439, C445/C455, C451/C464, and C466/C480. EGF-like domains lie at 241–281 and 284–324; these read GAWD…RSCT and ATQS…HRCE. Residues 325–363 form the EGF-like 3; calcium-binding domain; that stretch reads DVDDCILEPSPCPQRCVNTQGGFECHCYPNYDLVDGECV. N342 bears the (3R)-3-hydroxyasparagine mark. EGF-like domains are found at residues 365-405 and 404-440; these read PVDP…HRCQ and CQMF…FICT. N382 is a glycosylation site (N-linked (GlcNAc...) asparagine). N-linked (GlcNAc...) asparagine glycosylation is present at N409. The EGF-like 6; calcium-binding domain occupies 441-481; that stretch reads DIDECENGGFCSGVCHNLPGTFECICGPDSALARHIGTDCD. Residues 481–515 are involved in alpha-L/beta-2 and alpha-M/beta-2 integrin binding; that stretch reads DSGKVDGGDSGSGEPPPSPTPGSTLTPPAVGLVHS. A disordered region spans residues 484 to 506; the sequence is KVDGGDSGSGEPPPSPTPGSTLT. Residues S490 and S492 are each glycosylated (O-linked (Xyl...) (chondroitin sulfate) serine). Residues 516–539 form a helical membrane-spanning segment; that stretch reads GLLIGISIASLCLVVALLALLCHL. Topologically, residues 540-575 are cytoplasmic; the sequence is RKKQGAARAKMEYKCAAPSKEVVLQHVRTERTPQRL.

Interacts with ITGAL, ITGAM and ITGB2. Interacts with thrombin/F2; this interaction switches the specificity of thrombin from a procoagulant to an anticoagulant and antifibrinolytic protease. Interacts with ANGP1 and ANGP2; these interactions significantly inhibit the generation of activated PC and TAFIa/CPB2 by the thrombin/thrombomodulin complex. Interacts with PF4; this interaction enhances generation of activated protein C. Interacts with HMGB1; this interaction inhibits HMGB1 inflammatory activity. In terms of processing, N-glycosylated. Post-translationally, the iron and 2-oxoglutarate dependent 3-hydroxylation of aspartate and asparagine is (R) stereospecific within EGF domains. Endothelial cells are unique in synthesizing thrombomodulin.

It is found in the membrane. In terms of biological role, endothelial cell receptor that plays a critical role in regulating several physiological processes including hemostasis, coagulation, fibrinolysis, inflammation, and angiogenesis. Acts as a cofactor for thrombin activation of protein C/PROC on the surface of vascular endothelial cells leading to initiation of the activated protein C anticoagulant pathway. Also accelerates the activation of the plasma carboxypeptidase B2/CPB2, which catalyzes removal of C-terminal basic amino acids from its substrates including kinins or anaphylatoxins leading to fibrinolysis inhibition. Plays critical protective roles in changing the cleavage specificity of protease-activated receptor 1/PAR1, inhibiting endothelial cell permeability and inflammation. Suppresses inflammation distinctly from its anticoagulant cofactor activity by sequestering HMGB1 thereby preventing it from engaging cellular receptors such as RAGE and contributing to the inflammatory response. The polypeptide is Thrombomodulin (THBD) (Homo sapiens (Human)).